The sequence spans 329 residues: MVKTQRVVITPGEPAGIGPDLVVQLAQREWPVELVVCADATLLTDRAAMLGLPLTLRPYSPNSPAQPQTTGTLTLLPVALRESVTAGQLAIENGHYVVETLARACDGCLNGEFAALITGPVHKGVINDASIPFTGHTEFFEERSQAKKVVMMLATEELRVALATTHLPLRDIADAITPALLHEVIAILHHDLRTKFGIAEPRILVCGLNPHAGEGGHMGTEEIDTIIPVLDELRAQGMKLNGPLPADTLFQPKYLDNADAVLAMYHDQGLPVLKYQGFGRGVNITLGLPFIRTSVDHGTALELAGRGEADVGSFITALNLAIKMIVNTQ.

Histidine 136 and threonine 137 together coordinate substrate. Histidine 166, histidine 211, and histidine 266 together coordinate a divalent metal cation. Residues lysine 274, asparagine 283, and arginine 292 each coordinate substrate.

The protein belongs to the PdxA family. Homodimer. It depends on Zn(2+) as a cofactor. Mg(2+) is required as a cofactor. The cofactor is Co(2+).

It localises to the cytoplasm. The enzyme catalyses 4-(phosphooxy)-L-threonine + NAD(+) = 3-amino-2-oxopropyl phosphate + CO2 + NADH. It functions in the pathway cofactor biosynthesis; pyridoxine 5'-phosphate biosynthesis; pyridoxine 5'-phosphate from D-erythrose 4-phosphate: step 4/5. Its function is as follows. Catalyzes the NAD(P)-dependent oxidation of 4-(phosphooxy)-L-threonine (HTP) into 2-amino-3-oxo-4-(phosphooxy)butyric acid which spontaneously decarboxylates to form 3-amino-2-oxopropyl phosphate (AHAP). The sequence is that of 4-hydroxythreonine-4-phosphate dehydrogenase from Shigella flexneri serotype 5b (strain 8401).